The chain runs to 500 residues: ACT domain-containing protein ACR2 (500 aa).

ACT domains are found at residues 39-121 (VVKV…EANN), 136-213 (AIEM…ADPA), 298-373 (IVTV…RVCE), and 376-459 (KLEL…TVGS). Residues 450–478 (EDTKIDTVGSDEPTASASATPQRQPQPHR) form a disordered region. Over residues 462 to 474 (PTASASATPQRQP) the composition is skewed to polar residues.

Functionally, may bind amino acids. The protein is ACT domain-containing protein ACR2 of Arabidopsis thaliana (Mouse-ear cress).